The following is a 107-amino-acid chain: Thioredoxin-1 (107 aa).

Residues 2–106 (ASVRTMNDYH…LTNMMAKLVK (105 aa)) form the Thioredoxin domain. Active-site nucleophile residues include Cys-31 and Cys-34. A disulfide bridge links Cys-31 with Cys-34.

It belongs to the thioredoxin family. As to expression, ovary specific. Expressed present in the nurse cells from stage 9 of ovary development and is transported into the oocyte. Expressed throughout oogenesis.

It is found in the nucleus. Its function is as follows. Participates in various redox reactions through the reversible oxidation of its active center dithiol to a disulfide and catalyzes dithiol-disulfide exchange reactions. As a reducing substrate of peroxiredoxin 1, thioredoxin 2 is preferred over thioredoxin 1. Required for female meiosis and early embryonic development. This chain is Thioredoxin-1 (dhd), found in Drosophila melanogaster (Fruit fly).